Here is a 401-residue protein sequence, read N- to C-terminus: Argininosuccinate synthase (401 aa).

An ATP-binding site is contributed by 9-17 (AYSGGLDTS). Tyrosine 86 is an L-citrulline binding site. Position 116 (glycine 116) interacts with ATP. 3 residues coordinate L-aspartate: threonine 118, asparagine 122, and aspartate 123. Residue asparagine 122 participates in L-citrulline binding. Positions 126, 174, 183, 259, and 271 each coordinate L-citrulline.

Belongs to the argininosuccinate synthase family. Type 1 subfamily. Homotetramer.

Its subcellular location is the cytoplasm. The enzyme catalyses L-citrulline + L-aspartate + ATP = 2-(N(omega)-L-arginino)succinate + AMP + diphosphate + H(+). The protein operates within amino-acid biosynthesis; L-arginine biosynthesis; L-arginine from L-ornithine and carbamoyl phosphate: step 2/3. The chain is Argininosuccinate synthase from Bacillus cereus (strain AH187).